The sequence spans 234 residues: Orotidine 5'-phosphate decarboxylase (234 aa).

Substrate-binding positions include aspartate 11, lysine 33, 60–69 (DLKFHDIPNT), threonine 120, arginine 181, glutamine 190, glycine 210, and arginine 211. Lysine 62 functions as the Proton donor in the catalytic mechanism.

This sequence belongs to the OMP decarboxylase family. Type 1 subfamily. In terms of assembly, homodimer.

The catalysed reaction is orotidine 5'-phosphate + H(+) = UMP + CO2. It participates in pyrimidine metabolism; UMP biosynthesis via de novo pathway; UMP from orotate: step 2/2. Functionally, catalyzes the decarboxylation of orotidine 5'-monophosphate (OMP) to uridine 5'-monophosphate (UMP). In Aliivibrio salmonicida (strain LFI1238) (Vibrio salmonicida (strain LFI1238)), this protein is Orotidine 5'-phosphate decarboxylase.